A 295-amino-acid polypeptide reads, in one-letter code: Succinate dehydrogenase assembly factor 2, mitochondrial (295 aa).

Disordered regions lie at residues 35–90 (AKDN…PELL), 208–227 (PEEG…RTGA), and 269–295 (TGFH…VFDS). Polar residues predominate over residues 45–75 (STPSTAPEYRQNQTSKPPNQFMPNSTSTMTN).

The protein belongs to the SDHAF2 family. In terms of assembly, interacts with the flavoprotein subunit within the SDH catalytic dimer.

Its subcellular location is the mitochondrion matrix. Its function is as follows. Plays an essential role in the assembly of succinate dehydrogenase (SDH), an enzyme complex (also referred to as respiratory complex II) that is a component of both the tricarboxylic acid (TCA) cycle and the mitochondrial electron transport chain, and which couples the oxidation of succinate to fumarate with the reduction of ubiquinone (coenzyme Q) to ubiquinol. Required for flavinylation (covalent attachment of FAD) of the flavoprotein subunit of the SDH catalytic dimer. In Aspergillus terreus (strain NIH 2624 / FGSC A1156), this protein is Succinate dehydrogenase assembly factor 2, mitochondrial.